A 292-amino-acid polypeptide reads, in one-letter code: Hypersensitive-induced response protein 4 (292 aa).

A lipid anchor (N-myristoyl glycine) is attached at glycine 2.

In terms of assembly, self-interacts and forms heteromers. Interacts with NB-LRR class of R proteins before R proteins (e.g. RPS2 or RPM1) are activated by the effectors.

It localises to the cell membrane. This Arabidopsis thaliana (Mouse-ear cress) protein is Hypersensitive-induced response protein 4 (HIR4).